A 387-amino-acid chain; its full sequence is Arginine biosynthesis bifunctional protein ArgJ 2 (387 aa).

Positions 147, 169, 180, 259, 382, and 387 each coordinate substrate. Catalysis depends on threonine 180, which acts as the Nucleophile.

The protein belongs to the ArgJ family. As to quaternary structure, heterotetramer of two alpha and two beta chains.

Its subcellular location is the cytoplasm. The enzyme catalyses N(2)-acetyl-L-ornithine + L-glutamate = N-acetyl-L-glutamate + L-ornithine. It catalyses the reaction L-glutamate + acetyl-CoA = N-acetyl-L-glutamate + CoA + H(+). It functions in the pathway amino-acid biosynthesis; L-arginine biosynthesis; L-ornithine and N-acetyl-L-glutamate from L-glutamate and N(2)-acetyl-L-ornithine (cyclic): step 1/1. Its pathway is amino-acid biosynthesis; L-arginine biosynthesis; N(2)-acetyl-L-ornithine from L-glutamate: step 1/4. Catalyzes two activities which are involved in the cyclic version of arginine biosynthesis: the synthesis of N-acetylglutamate from glutamate and acetyl-CoA as the acetyl donor, and of ornithine by transacetylation between N(2)-acetylornithine and glutamate. The chain is Arginine biosynthesis bifunctional protein ArgJ 2 from Nostoc sp. (strain PCC 7120 / SAG 25.82 / UTEX 2576).